The following is a 193-amino-acid chain: Xanthine phosphoribosyltransferase (193 aa).

Leu20 and Asn27 together coordinate xanthine. Ala129–Ala133 contributes to the 5-phospho-alpha-D-ribose 1-diphosphate binding site. Xanthine is bound at residue Lys157.

Belongs to the purine/pyrimidine phosphoribosyltransferase family. Xpt subfamily. Homodimer.

Its subcellular location is the cytoplasm. The enzyme catalyses XMP + diphosphate = xanthine + 5-phospho-alpha-D-ribose 1-diphosphate. The protein operates within purine metabolism; XMP biosynthesis via salvage pathway; XMP from xanthine: step 1/1. Converts the preformed base xanthine, a product of nucleic acid breakdown, to xanthosine 5'-monophosphate (XMP), so it can be reused for RNA or DNA synthesis. The polypeptide is Xanthine phosphoribosyltransferase (Bifidobacterium animalis subsp. lactis (strain AD011)).